Here is a 192-residue protein sequence, read N- to C-terminus: Erythropoietin (192 aa).

A signal peptide spans 1–26 (MGVPERPTLLLLLSLLLIPLGLPVLC). A disulfide bridge links cysteine 33 with cysteine 187. N-linked (GlcNAc...) asparagine glycosylation is found at asparagine 50, asparagine 64, and asparagine 109.

This sequence belongs to the EPO/TPO family. Produced by kidney or liver of adult mammals and by liver of fetal or neonatal mammals.

The protein resides in the secreted. In terms of biological role, hormone involved in the regulation of erythrocyte proliferation and differentiation and the maintenance of a physiological level of circulating erythrocyte mass. Binds to EPOR leading to EPOR dimerization and JAK2 activation thereby activating specific downstream effectors, including STAT1 and STAT3. The protein is Erythropoietin (Epo) of Rattus norvegicus (Rat).